The chain runs to 181 residues: MVTPRRDSGSDRPSLKDARILVVEARYYDDIADELLRGATEAIAASGAEAEVVTVPGALEIPQTVAILVEAAMRSGKPYDAVVALGCVIRGETGHYDIVAGESARALMDLSVLLRLPLGNGILTVETEAQAQARARVSEMNKGGGAAEAALAVLALKRANAAEHPGRTIGFTPRRAAETAE.

5-amino-6-(D-ribitylamino)uracil-binding positions include tyrosine 27, 58–60 (ALE), and 87–89 (CVI). Residue 92–93 (ET) participates in (2S)-2-hydroxy-3-oxobutyl phosphate binding. Histidine 95 (proton donor) is an active-site residue. Asparagine 120 serves as a coordination point for 5-amino-6-(D-ribitylamino)uracil. Arginine 134 contacts (2S)-2-hydroxy-3-oxobutyl phosphate.

Belongs to the DMRL synthase family.

It carries out the reaction (2S)-2-hydroxy-3-oxobutyl phosphate + 5-amino-6-(D-ribitylamino)uracil = 6,7-dimethyl-8-(1-D-ribityl)lumazine + phosphate + 2 H2O + H(+). Its pathway is cofactor biosynthesis; riboflavin biosynthesis; riboflavin from 2-hydroxy-3-oxobutyl phosphate and 5-amino-6-(D-ribitylamino)uracil: step 1/2. Its function is as follows. Catalyzes the formation of 6,7-dimethyl-8-ribityllumazine by condensation of 5-amino-6-(D-ribitylamino)uracil with 3,4-dihydroxy-2-butanone 4-phosphate. This is the penultimate step in the biosynthesis of riboflavin. This is 6,7-dimethyl-8-ribityllumazine synthase from Methylobacterium nodulans (strain LMG 21967 / CNCM I-2342 / ORS 2060).